A 210-amino-acid polypeptide reads, in one-letter code: ATP-dependent Clp protease proteolytic subunit (210 aa).

The Nucleophile role is filled by serine 106. Histidine 131 is an active-site residue.

The protein belongs to the peptidase S14 family. Fourteen ClpP subunits assemble into 2 heptameric rings which stack back to back to give a disk-like structure with a central cavity, resembling the structure of eukaryotic proteasomes.

The protein localises to the cytoplasm. It carries out the reaction Hydrolysis of proteins to small peptides in the presence of ATP and magnesium. alpha-casein is the usual test substrate. In the absence of ATP, only oligopeptides shorter than five residues are hydrolyzed (such as succinyl-Leu-Tyr-|-NHMec, and Leu-Tyr-Leu-|-Tyr-Trp, in which cleavage of the -Tyr-|-Leu- and -Tyr-|-Trp bonds also occurs).. Cleaves peptides in various proteins in a process that requires ATP hydrolysis. Has a chymotrypsin-like activity. Plays a major role in the degradation of misfolded proteins. This chain is ATP-dependent Clp protease proteolytic subunit, found in Bartonella quintana (strain Toulouse) (Rochalimaea quintana).